A 167-amino-acid chain; its full sequence is Urease accessory protein UreE (167 aa).

Belongs to the UreE family.

It localises to the cytoplasm. Involved in urease metallocenter assembly. Binds nickel. Probably functions as a nickel donor during metallocenter assembly. The protein is Urease accessory protein UreE of Pseudomonas paraeruginosa (strain DSM 24068 / PA7) (Pseudomonas aeruginosa (strain PA7)).